The following is a 160-amino-acid chain: uncharacterized protein (160 aa).

Residues Leu8 to Ala28 traverse the membrane as a helical segment.

The protein localises to the membrane. This is an uncharacterized protein from Escherichia coli (strain K12).